The sequence spans 260 residues: Ribonuclease 3 (260 aa).

Residues 1 to 24 (MAQSSKYQRKPRSGERKRSQRRLE) form a disordered region. Positions 12-24 (RSGERKRSQRRLE) are enriched in basic and acidic residues. The RNase III domain maps to 33–162 (FDDLLVRTGL…FIGALYMDQG (130 aa)). Residue Glu75 participates in Mg(2+) binding. Residue Asp79 is part of the active site. The Mg(2+) site is built by Asp148 and Glu151. Glu151 is an active-site residue. The region spanning 188-257 (DFKSQLQEFV…AKQALLALNQ (70 aa)) is the DRBM domain.

The protein belongs to the ribonuclease III family. Homodimer. The cofactor is Mg(2+).

The protein localises to the cytoplasm. The enzyme catalyses Endonucleolytic cleavage to 5'-phosphomonoester.. In terms of biological role, digests double-stranded RNA. Involved in the processing of primary rRNA transcript to yield the immediate precursors to the large and small rRNAs (23S and 16S). Processes some mRNAs, and tRNAs when they are encoded in the rRNA operon. Processes pre-crRNA and tracrRNA of type II CRISPR loci if present in the organism. The protein is Ribonuclease 3 of Shouchella clausii (strain KSM-K16) (Alkalihalobacillus clausii).